We begin with the raw amino-acid sequence, 314 residues long: Malate dehydrogenase (314 aa).

NAD(+) is bound by residues 12–17 (GAGFTG) and D36. R87 and R93 together coordinate substrate. NAD(+) contacts are provided by residues N100 and 123-125 (LTN). N125 contacts substrate. The residue at position 149 (S149) is a Phosphoserine. R156 is a binding site for substrate. The Proton acceptor role is filled by H180.

This sequence belongs to the LDH/MDH superfamily. MDH type 3 family.

The enzyme catalyses (S)-malate + NAD(+) = oxaloacetate + NADH + H(+). Functionally, catalyzes the reversible oxidation of malate to oxaloacetate. In Halalkalibacterium halodurans (strain ATCC BAA-125 / DSM 18197 / FERM 7344 / JCM 9153 / C-125) (Bacillus halodurans), this protein is Malate dehydrogenase.